Reading from the N-terminus, the 97-residue chain is MGKKKKEKLSVAREIDGMEEKVALCKYNLDVIDVKLRKMELTEEGRKSLEKEKSSLSSRLSNYERELKSLRHENRKNMLLSVAIFLLFAVGYYCWTL.

Residues 36 to 80 (LRKMELTEEGRKSLEKEKSSLSSRLSNYERELKSLRHENRKNMLL) are a coiled coil. The helical transmembrane segment at 78 to 95 (MLLSVAIFLLFAVGYYCW) threads the bilayer.

Its subcellular location is the membrane. This Xenopus tropicalis (Western clawed frog) protein is Coiled-coil domain-containing protein 167 (ccdc167).